Here is a 97-residue protein sequence, read N- to C-terminus: Gibberellin-regulated protein 5 (97 aa).

The first 27 residues, 1–27, serve as a signal peptide directing secretion; it reads MANCIRRNALFFLTLLFLLSVSNLVQA.

The protein belongs to the GASA family. In terms of processing, six disulfide bonds may be present. In terms of tissue distribution, expressed in roots, root hairs, vasculature of cotyledons and hypocotyls, shoot apex, leaf veins, stems, flower receptacles, pollen, filaments, anthers and siliques.

The protein localises to the secreted. Its subcellular location is the cell wall. It localises to the extracellular space. It is found in the extracellular matrix. Gibberellin-regulated protein that acts as a negative regulator of gibberellin-induced flowering and stem growth. May inhibit flowering and inflorescence growth via a pathway involving GAI and by enhancing FLC expression and repressing FT and LFY. Acts as a negative regulator in thermotolerance by resogulating both salicylic acid (SA) signaling and heat shock-protein accumulation. The polypeptide is Gibberellin-regulated protein 5 (GASA5) (Arabidopsis thaliana (Mouse-ear cress)).